Reading from the N-terminus, the 232-residue chain is tRNA (guanine-N(1)-)-methyltransferase (232 aa).

S-adenosyl-L-methionine is bound by residues Gly111 and Ile131–Leu136.

This sequence belongs to the RNA methyltransferase TrmD family. In terms of assembly, homodimer.

Its subcellular location is the cytoplasm. It catalyses the reaction guanosine(37) in tRNA + S-adenosyl-L-methionine = N(1)-methylguanosine(37) in tRNA + S-adenosyl-L-homocysteine + H(+). Specifically methylates guanosine-37 in various tRNAs. The polypeptide is tRNA (guanine-N(1)-)-methyltransferase (Bartonella henselae (strain ATCC 49882 / DSM 28221 / CCUG 30454 / Houston 1) (Rochalimaea henselae)).